Reading from the N-terminus, the 230-residue chain is Protein-L-isoaspartate O-methyltransferase 1 (230 aa).

Ser65 is an active-site residue.

The protein belongs to the methyltransferase superfamily. L-isoaspartyl/D-aspartyl protein methyltransferase family. In terms of assembly, monomer. As to expression, expressed in roots, rosette leaves, stems, cauline leaves, flowers and developing seeds.

It localises to the cytoplasm. The catalysed reaction is [protein]-L-isoaspartate + S-adenosyl-L-methionine = [protein]-L-isoaspartate alpha-methyl ester + S-adenosyl-L-homocysteine. Its function is as follows. Catalyzes the methyl esterification of L-isoaspartyl residues in peptides and proteins that result from spontaneous decomposition of normal L-aspartyl and L-asparaginyl residues. It plays a role in the repair and/or degradation of damaged proteins. Contributes to seed longevity and germination vigor by limiting the abnormal accumulation of the L-isoaspartyl residues in seed proteins. This Arabidopsis thaliana (Mouse-ear cress) protein is Protein-L-isoaspartate O-methyltransferase 1 (PIMT1).